The following is a 349-amino-acid chain: Phosphoribosylformylglycinamidine cyclo-ligase (349 aa).

The protein belongs to the AIR synthase family.

It localises to the cytoplasm. The catalysed reaction is 2-formamido-N(1)-(5-O-phospho-beta-D-ribosyl)acetamidine + ATP = 5-amino-1-(5-phospho-beta-D-ribosyl)imidazole + ADP + phosphate + H(+). Its pathway is purine metabolism; IMP biosynthesis via de novo pathway; 5-amino-1-(5-phospho-D-ribosyl)imidazole from N(2)-formyl-N(1)-(5-phospho-D-ribosyl)glycinamide: step 2/2. This is Phosphoribosylformylglycinamidine cyclo-ligase from Bordetella parapertussis (strain 12822 / ATCC BAA-587 / NCTC 13253).